The primary structure comprises 60 residues: Bacteriochlorophyll c-binding protein (60 aa).

Met-1 bears the N-formylmethionine mark. Residue His-25 coordinates a bacteriochlorophyll c.

This sequence belongs to the BChl C/E-binding protein family.

It localises to the chlorosome. It is found in the chlorosome envelope. Component of the photosynthetic apparatus. The light harvesting B740 complex binds bacteriochlorophyll c. The sequence is that of Bacteriochlorophyll c-binding protein (csmA) from Pelodictyon luteolum.